The primary structure comprises 252 residues: Imidazole glycerol phosphate synthase subunit HisF (252 aa).

Residues Asp11 and Asp130 contribute to the active site.

It belongs to the HisA/HisF family. As to quaternary structure, heterodimer of HisH and HisF.

Its subcellular location is the cytoplasm. The catalysed reaction is 5-[(5-phospho-1-deoxy-D-ribulos-1-ylimino)methylamino]-1-(5-phospho-beta-D-ribosyl)imidazole-4-carboxamide + L-glutamine = D-erythro-1-(imidazol-4-yl)glycerol 3-phosphate + 5-amino-1-(5-phospho-beta-D-ribosyl)imidazole-4-carboxamide + L-glutamate + H(+). It functions in the pathway amino-acid biosynthesis; L-histidine biosynthesis; L-histidine from 5-phospho-alpha-D-ribose 1-diphosphate: step 5/9. Its function is as follows. IGPS catalyzes the conversion of PRFAR and glutamine to IGP, AICAR and glutamate. The HisF subunit catalyzes the cyclization activity that produces IGP and AICAR from PRFAR using the ammonia provided by the HisH subunit. The sequence is that of Imidazole glycerol phosphate synthase subunit HisF from Staphylococcus epidermidis (strain ATCC 12228 / FDA PCI 1200).